The sequence spans 487 residues: CUGBP Elav-like family member 1 (487 aa).

At Met-1 the chain carries N-acetylmethionine. Thr-4 is modified (phosphothreonine). RRM domains lie at 16 to 99 and 108 to 188; these read IKMF…PADS and RKLF…FADT. Lys-109 is covalently cross-linked (Glycyl lysine isopeptide (Lys-Gly) (interchain with G-Cter in SUMO2)). Residues Ser-179 and Ser-303 each carry the phosphoserine modification. Residues 277-310 form a disordered region; sequence TPSGTNALTTSSSPLSVLTSSAGSSPSSSSSNSV. Residues 283-310 are compositionally biased toward low complexity; it reads ALTTSSSPLSVLTSSAGSSPSSSSSNSV. The RRM 3 domain occupies 402 to 480; the sequence is ANLFIYHLPQ…KRLKVQLKRS (79 aa).

This sequence belongs to the CELF/BRUNOL family. As to quaternary structure, interacts with HNRNPH1; the interaction in RNA-dependent. Interacts with PARN. Component of an EIF2 complex at least composed of CELF1/CUGBP1, CALR, CALR3, EIF2S1, EIF2S2, HSP90B1 and HSPA5. Associates with polysomes.

The protein localises to the nucleus. It is found in the cytoplasm. Its function is as follows. RNA-binding protein implicated in the regulation of several post-transcriptional events. Involved in pre-mRNA alternative splicing, mRNA translation and stability. Mediates exon inclusion and/or exclusion in pre-mRNA that are subject to tissue-specific and developmentally regulated alternative splicing. Specifically activates exon 5 inclusion of cardiac isoforms of TNNT2 during heart remodeling at the juvenile to adult transition. Acts both as an activator and as a repressor of a pair of coregulated exons: promotes inclusion of the smooth muscle (SM) exon but exclusion of the non-muscle (NM) exon in actinin pre-mRNAs. Activates SM exon 5 inclusion by antagonizing the repressive effect of PTB. Promotes exclusion of exon 11 of the INSR pre-mRNA. Inhibits, together with HNRNPH1, insulin receptor (IR) pre-mRNA exon 11 inclusion in myoblast. Increases translation and controls the choice of translation initiation codon of CEBPB mRNA. Increases mRNA translation of CEBPB in aging liver. Increases translation of CDKN1A mRNA by antagonizing the repressive effect of CALR3. Mediates rapid cytoplasmic mRNA deadenylation. Recruits the deadenylase PARN to the poly(A) tail of EDEN-containing mRNAs to promote their deadenylation. Required for completion of spermatogenesis. Binds to (CUG)n triplet repeats in the 3'-UTR of transcripts such as DMPK and to Bruno response elements (BREs). Binds to muscle-specific splicing enhancer (MSE) intronic sites flanking the alternative exon 5 of TNNT2 pre-mRNA. Binds to AU-rich sequences (AREs or EDEN-like) localized in the 3'-UTR of JUN and FOS mRNAs. Binds to the IR RNA. Binds to the 5'-region of CDKN1A and CEBPB mRNAs. Binds with the 5'-region of CEBPB mRNA in aging liver. May be a specific regulator of miRNA biogenesis. Binds to primary microRNA pri-MIR140 and, with CELF2, negatively regulates the processing to mature miRNA. This Rattus norvegicus (Rat) protein is CUGBP Elav-like family member 1 (Celf1).